We begin with the raw amino-acid sequence, 178 residues long: Hypoxanthine phosphoribosyltransferase (178 aa).

The diphosphate site is built by Arg-43 and Gly-44. Glu-99 contributes to the GMP binding site. IMP is bound at residue Glu-99. The Mg(2+) site is built by Glu-99 and Asp-100. The active-site Proton acceptor is Asp-103. Residues 103 to 108 (DSGNTL), Lys-131, and Asp-159 contribute to the GMP site. IMP-binding positions include 103-108 (DSGNTL) and Lys-131. Residue Arg-165 participates in diphosphate binding.

Belongs to the purine/pyrimidine phosphoribosyltransferase family. Homotetramer. The cofactor is Mg(2+).

It localises to the cytoplasm. The enzyme catalyses IMP + diphosphate = hypoxanthine + 5-phospho-alpha-D-ribose 1-diphosphate. It carries out the reaction GMP + diphosphate = guanine + 5-phospho-alpha-D-ribose 1-diphosphate. Its pathway is purine metabolism; IMP biosynthesis via salvage pathway; IMP from hypoxanthine: step 1/1. Its function is as follows. Purine salvage pathway enzyme which catalyzes the transfer of the ribosyl-5-phosphate group from 5-phospho-alpha-D-ribose 1-diphosphate (PRPP) to the N9 position of hypoxanthine to yield IMP (inosine 5'-monophosphate). To a lesser extent, can also act on guanine leading to GMP, but shows a highly less efficient activity with xanthine. This chain is Hypoxanthine phosphoribosyltransferase (hpt), found in Shigella flexneri.